The sequence spans 148 residues: uncharacterized protein (148 aa).

The region spanning 2-63 (LDELDKRILY…LINPFKAGYE (62 aa)) is the HTH asnC-type domain. A DNA-binding region (H-T-H motif) is located at residues 21 to 40 (YSEIARILGVPESTVRVRVK).

This is an uncharacterized protein from Pyrococcus furiosus (strain ATCC 43587 / DSM 3638 / JCM 8422 / Vc1).